The following is a 185-amino-acid chain: Elongation factor P (185 aa).

Belongs to the elongation factor P family.

It localises to the cytoplasm. The protein operates within protein biosynthesis; polypeptide chain elongation. Involved in peptide bond synthesis. Stimulates efficient translation and peptide-bond synthesis on native or reconstituted 70S ribosomes in vitro. Probably functions indirectly by altering the affinity of the ribosome for aminoacyl-tRNA, thus increasing their reactivity as acceptors for peptidyl transferase. This chain is Elongation factor P, found in Bacillus velezensis (strain DSM 23117 / BGSC 10A6 / LMG 26770 / FZB42) (Bacillus amyloliquefaciens subsp. plantarum).